The primary structure comprises 1360 residues: DNA-directed RNA polymerase subunit beta (1360 aa).

It belongs to the RNA polymerase beta chain family. The RNAP catalytic core consists of 2 alpha, 1 beta, 1 beta' and 1 omega subunit. When a sigma factor is associated with the core the holoenzyme is formed, which can initiate transcription.

It catalyses the reaction RNA(n) + a ribonucleoside 5'-triphosphate = RNA(n+1) + diphosphate. Functionally, DNA-dependent RNA polymerase catalyzes the transcription of DNA into RNA using the four ribonucleoside triphosphates as substrates. The protein is DNA-directed RNA polymerase subunit beta of Vesicomyosocius okutanii subsp. Calyptogena okutanii (strain HA).